The following is a 174-amino-acid chain: Guided entry of tail-anchored proteins factor 1 (174 aa).

Topologically, residues 1 to 8 (MSAAEADR) are lumenal. Residues 9 to 29 (WAWLLVLSFVFGCNVLRILLP) form a helical membrane-spanning segment. The Cytoplasmic segment spans residues 30–99 (SFSFFMSRVL…VKARTAQLAK (70 aa)). Residues 39–94 (LQKDAEQESQMRAEIQGMKQELSTVNMMDEFARYARLERKINKMTDKLKTHVKART) are a coiled coil. Positions 39–97 (LQKDAEQESQMRAEIQGMKQELSTVNMMDEFARYARLERKINKMTDKLKTHVKARTAQL) are interaction with GET3/TRC40. The chain crosses the membrane as a helical span at residues 100–120 (IKWVISVAFYILQAALMVSLI). The Lumenal portion of the chain corresponds to 121–148 (WKYYSVPVAVVPSKWITPLDRLVAFPTR). A helical transmembrane segment spans residues 149 to 169 (VAGGVGITCWILVCNKVVAIV). The Cytoplasmic portion of the chain corresponds to 170-174 (LHPFS).

The protein belongs to the WRB/GET1 family. In terms of assembly, component of the Golgi to ER traffic (GET) complex, which is composed of GET1/WRB, CAMLG/GET2 and GET3. Within the complex, GET1 and CAMLG form a heterotetramer which is stabilized by phosphatidylinositol binding and which binds to the GET3 homodimer. Interacts with CAMLG (via C-terminus). GET3 shows a higher affinity for CAMLG than for GET1.

The protein localises to the endoplasmic reticulum membrane. Functionally, required for the post-translational delivery of tail-anchored (TA) proteins to the endoplasmic reticulum. Together with CAMLG/GET2, acts as a membrane receptor for soluble GET3/TRC40, which recognizes and selectively binds the transmembrane domain of TA proteins in the cytosol. Required to ensure correct topology and ER insertion of CAMLG. The chain is Guided entry of tail-anchored proteins factor 1 from Bos taurus (Bovine).